Reading from the N-terminus, the 279-residue chain is Urease accessory protein UreD (279 aa).

This sequence belongs to the UreD family. As to quaternary structure, ureD, UreF and UreG form a complex that acts as a GTP-hydrolysis-dependent molecular chaperone, activating the urease apoprotein by helping to assemble the nickel containing metallocenter of UreC. The UreE protein probably delivers the nickel.

The protein localises to the cytoplasm. In terms of biological role, required for maturation of urease via the functional incorporation of the urease nickel metallocenter. The sequence is that of Urease accessory protein UreD from Trichodesmium erythraeum (strain IMS101).